The primary structure comprises 486 residues: Uridine/cytidine kinase UKL1, chloroplastic (486 aa).

A chloroplast-targeting transit peptide spans 1–47 (MPEDSSSLDYAMEKASGPHFSGLRFDGLLSSSPPNSSVVSSLRSAVS). Residues 31-54 (SSPPNSSVVSSLRSAVSSSSPSSS) are compositionally biased toward low complexity. Residues 31–67 (SSPPNSSVVSSLRSAVSSSSPSSSDPEAPKQPFIIGV) are disordered. The segment at 59-264 (PKQPFIIGVS…ITQHIHTKLG (206 aa)) is uridine kinase. A uracil phosphoribosyltransferase region spans residues 274–486 (NVYVIQSTFQ…RYFGTDEEDQ (213 aa)). GTP contacts are provided by residues Lys298, Arg307, and 341–344 (CKKL). Arg351 and Arg376 together coordinate 5-phospho-alpha-D-ribose 1-diphosphate. Arg396 lines the GTP pocket. 5-phospho-alpha-D-ribose 1-diphosphate-binding positions include Asp402, 407–410 (TGNS), and Glu473. 472–474 (GEF) serves as a coordination point for uracil.

It in the N-terminal section; belongs to the uridine kinase family. This sequence in the C-terminal section; belongs to the UPRTase family. As to expression, expressed in roots, leaves and stems.

It localises to the plastid. Its subcellular location is the chloroplast. The protein localises to the cytoplasm. The catalysed reaction is cytidine + ATP = CMP + ADP + H(+). It carries out the reaction uridine + ATP = UMP + ADP + H(+). It participates in pyrimidine metabolism; CTP biosynthesis via salvage pathway; CTP from cytidine: step 1/3. Its pathway is pyrimidine metabolism; UMP biosynthesis via salvage pathway; UMP from uridine: step 1/1. In terms of biological role, involved in the pyrimidine salvage pathway. Phosphorylates uridine to uridine monophosphate (UMP). Phosphorylates cytidine to cytidine monophosphate (CMP). Does not possess uracil phosphoribosyltransferase (UPRTase) activity that catalyzes the conversion of uracil and 5-phospho-alpha-D-ribose 1-diphosphate (PRPP) to UMP and diphosphate. This is Uridine/cytidine kinase UKL1, chloroplastic from Arabidopsis thaliana (Mouse-ear cress).